We begin with the raw amino-acid sequence, 88 residues long: Gas vesicle protein A2 (88 aa).

This sequence belongs to the gas vesicle GvpA family. The gas vesicle shell is 2 nm thick and consists of a single layer of this protein. It forms helical ribs nearly perpendicular to the long axis of the vesicle.

The protein resides in the gas vesicle shell. In terms of biological role, gas vesicles are hollow, gas filled proteinaceous nanostructures found in some microorganisms. During planktonic growth they allow positioning of the organism at a favorable depth for light or nutrient acquisition. GvpA forms the protein shell. Its function is as follows. It is not clear if the 2 type A proteins in this organism are functionally redundant. When a minimal gvp locus (gvpA2-gvpR-gvpN-gvpF-gvpG-gvpL-gvpS-gvpK-gvpJ-gvpT-gvpU, called pNL29) is expressed in E.coli gas vesicles are made. This Priestia megaterium (Bacillus megaterium) protein is Gas vesicle protein A2.